The chain runs to 338 residues: Ketol-acid reductoisomerase (NADP(+)) (338 aa).

A KARI N-terminal Rossmann domain is found at 1-181; sequence MKVFYDKDAD…GGGRAGIIET (181 aa). Residues 24 to 27, Arg-47, and Ser-52 contribute to the NADP(+) site; that span reads YGSQ. The active site involves His-107. NADP(+) is bound at residue Gly-133. The KARI C-terminal knotted domain occupies 182-327; it reads NFREETETDL…AKLRAMMPWI (146 aa). Asp-190, Glu-194, Glu-226, and Glu-230 together coordinate Mg(2+). Substrate is bound at residue Ser-251.

The protein belongs to the ketol-acid reductoisomerase family. The cofactor is Mg(2+).

It carries out the reaction (2R)-2,3-dihydroxy-3-methylbutanoate + NADP(+) = (2S)-2-acetolactate + NADPH + H(+). It catalyses the reaction (2R,3R)-2,3-dihydroxy-3-methylpentanoate + NADP(+) = (S)-2-ethyl-2-hydroxy-3-oxobutanoate + NADPH + H(+). Its pathway is amino-acid biosynthesis; L-isoleucine biosynthesis; L-isoleucine from 2-oxobutanoate: step 2/4. It functions in the pathway amino-acid biosynthesis; L-valine biosynthesis; L-valine from pyruvate: step 2/4. Involved in the biosynthesis of branched-chain amino acids (BCAA). Catalyzes an alkyl-migration followed by a ketol-acid reduction of (S)-2-acetolactate (S2AL) to yield (R)-2,3-dihydroxy-isovalerate. In the isomerase reaction, S2AL is rearranged via a Mg-dependent methyl migration to produce 3-hydroxy-3-methyl-2-ketobutyrate (HMKB). In the reductase reaction, this 2-ketoacid undergoes a metal-dependent reduction by NADPH to yield (R)-2,3-dihydroxy-isovalerate. This chain is Ketol-acid reductoisomerase (NADP(+)), found in Polynucleobacter asymbioticus (strain DSM 18221 / CIP 109841 / QLW-P1DMWA-1) (Polynucleobacter necessarius subsp. asymbioticus).